A 202-amino-acid polypeptide reads, in one-letter code: MSGRSVRAETRSRAKDDIKKVMAAIEKVRKWEKKWVTVGDTSLRIFKWVPVTDSKEKEKSKSNSSAAREPNGFPSDASANSSLLLEFQDENSNQSSVSDVYQLKVDSSTNSSPSPQQSESLSPAHTSDFRTDDSQPPTLGQEILEEPSLPSSEVADEPPTLTKEEPVPLETQVVEEEEDSGAPPLKRFCVDQPTVPQTASES.

The interval 53 to 202 is disordered; sequence DSKEKEKSKS…PTVPQTASES (150 aa). Over residues 90-99 the composition is skewed to polar residues; the sequence is ENSNQSSVSD. The span at 107-123 shows a compositional bias: low complexity; the sequence is SSTNSSPSPQQSESLSP. 7 positions are modified to phosphoserine: serine 114, serine 118, serine 120, serine 122, serine 127, serine 148, and serine 152.

The protein belongs to the BCL7 family. As to expression, ubiquitous.

Functionally, positive regulator of apoptosis. Plays a role in the Wnt signaling pathway, negatively regulating the expression of Wnt signaling components CTNNB1 and HMGA1. Involved in cell cycle progression, maintenance of the nuclear structure and stem cell differentiation. May play a role in lung tumor development or progression. This is B-cell CLL/lymphoma 7 protein family member B (BCL7B) from Homo sapiens (Human).